Reading from the N-terminus, the 872-residue chain is Extended synaptotagmin-2-A (872 aa).

Positions 1-25 (MSSESSAEKGPPPSPAENVQPGVPP) are disordered. The Cytoplasmic segment spans residues 1-31 (MSSESSAEKGPPPSPAENVQPGVPPAAEEPG). A helical transmembrane segment spans residues 32-52 (MISVDIAGLFYQFSKTFILIF). Over 53-55 (PVY) the chain is Lumenal. Residues 56–76 (VLGYFGLSFSWLLIALVLLLW) traverse the membrane as a helical segment. The Cytoplasmic segment spans residues 77–872 (WRRNKGNKNS…EDGTRPAVSS (796 aa)). The 180-residue stretch at 119 to 298 (DIERAEWLNK…LPNRITVPLV (180 aa)) folds into the SMP-LTD domain. 2 consecutive C2 domains span residues 297-417 (LVSD…DEWF) and 442-588 (NLDQ…HLNN). Ca(2+)-binding residues include K328, D329, D341, D388, E389, D390, D392, D394, and D395. The span at 608–617 (KPVRSPDEQH) shows a compositional bias: basic and acidic residues. The interval 608-711 (KPVRSPDEQH…EPTPSIASDI (104 aa)) is disordered. Over residues 632–652 (PPTPQMPSPSPAVAHKPPPTP) the composition is skewed to pro residues. Over residues 664-681 (NKGTPPSASPKSPTELHQ) the composition is skewed to polar residues. Over residues 682–696 (SSSSLSGSSFTYSPS) the composition is skewed to low complexity. One can recognise a C2 3 domain in the interval 737–859 (PLGQIQLTIR…DAAKGWTQWY (123 aa)). The tract at residues 784-791 (KRRSGRRK) is required for phosphatidylinositol 4,5-bisphosphate-dependent location at the cell membrane.

The protein belongs to the extended synaptotagmin family. As to quaternary structure, interacts with fgfr1 that has been activated by fgf1 binding. Interacts (via C2 domains) with the AP-2 complex (via an alpha subunit). Identified in a complex with the AP-2 complex and fgfr1.

The protein resides in the cell membrane. Its subcellular location is the endoplasmic reticulum membrane. Functionally, tethers the endoplasmic reticulum to the cell membrane and promotes the formation of appositions between the endoplasmic reticulum and the cell membrane. Binds glycerophospholipids in a barrel-like domain and may play a role in cellular lipid transport. Plays a role in the rapid internalization of fgfr1 that has been activated by fgf1 binding; this occurs most likely via the AP-2 complex. Required for normal fgf signaling and the activation of downstream signaling cascades via its role in the internalization of activated fgfr1. Required for normal embryonic development via its role in fgf signaling and the downstream regulation of t/xBRA expression. The chain is Extended synaptotagmin-2-A (esyt2-a) from Xenopus laevis (African clawed frog).